A 267-amino-acid chain; its full sequence is Tetrahydromethanopterin S-methyltransferase subunit C (267 aa).

A run of 8 helical transmembrane segments spans residues 18–38, 39–59, 76–96, 99–119, 138–158, 163–183, 209–229, and 230–250; these read LMALGILGGLAGIYASAVNPV, IGPVLASLGAVCAIVWGADAI, YMSVSIGIVGVVAGLASVFVV, IAVPVVALILAMILGVVVAVL, ISGAAALSVLGFSAAIAGSYT, LTSVITTGFIGLLFILNTMAI, FISMAIVGLLGIGLNPSWWLV, and SLIGALCWIVAFRAFVSASFE.

This sequence belongs to the MtrC family. The complex is composed of 8 subunits; MtrA, MtrB, MtrC, MtrD, MtrE, MtrF, MtrG and MtrH.

Its subcellular location is the cell membrane. The catalysed reaction is 5-methyl-5,6,7,8-tetrahydromethanopterin + coenzyme M + 2 Na(+)(in) = 5,6,7,8-tetrahydromethanopterin + methyl-coenzyme M + 2 Na(+)(out). It participates in one-carbon metabolism; methanogenesis from CO(2); methyl-coenzyme M from 5,10-methylene-5,6,7,8-tetrahydromethanopterin: step 2/2. In terms of biological role, part of a complex that catalyzes the formation of methyl-coenzyme M and tetrahydromethanopterin from coenzyme M and methyl-tetrahydromethanopterin. This is an energy-conserving, sodium-ion translocating step. This is Tetrahydromethanopterin S-methyltransferase subunit C from Methanothermobacter marburgensis (strain ATCC BAA-927 / DSM 2133 / JCM 14651 / NBRC 100331 / OCM 82 / Marburg) (Methanobacterium thermoautotrophicum).